Here is an 85-residue protein sequence, read N- to C-terminus: MAHKKAGGSTNNGRDSESKRLGVKRFGGESVLAGNIIVRQRGTKFHAGTNVGIGKDHTLFALTEGKVKFAVKGPKNRKFVSIEAE.

Residues 1 to 22 (MAHKKAGGSTNNGRDSESKRLG) are disordered.

Belongs to the bacterial ribosomal protein bL27 family.

The chain is Large ribosomal subunit protein bL27 from Vibrio atlanticus (strain LGP32) (Vibrio splendidus (strain Mel32)).